A 180-amino-acid polypeptide reads, in one-letter code: uncharacterized protein (180 aa).

Residues 3 to 33 are a coiled coil; it reads QQQSNNSNDNKEQLDRVIESLNRVNSETKQI.

This is an uncharacterized protein from Acanthamoeba polyphaga (Amoeba).